The chain runs to 219 residues: Ribose-5-phosphate isomerase A (219 aa).

Substrate-binding positions include 28 to 31 (SGST), 81 to 84 (DGAD), and 94 to 97 (KGGG). Glu-103 serves as the catalytic Proton acceptor. Lys-121 lines the substrate pocket.

This sequence belongs to the ribose 5-phosphate isomerase family. In terms of assembly, homodimer.

The catalysed reaction is aldehydo-D-ribose 5-phosphate = D-ribulose 5-phosphate. Its pathway is carbohydrate degradation; pentose phosphate pathway; D-ribose 5-phosphate from D-ribulose 5-phosphate (non-oxidative stage): step 1/1. Catalyzes the reversible conversion of ribose-5-phosphate to ribulose 5-phosphate. The protein is Ribose-5-phosphate isomerase A of Haemophilus influenzae (strain PittEE).